The sequence spans 403 residues: Chromatin structure-remodeling complex subunit SFH1 (403 aa).

A disordered region spans residues 58 to 115 (FPTFDIDSDSNDEEQSSASAGNDDPQANANGGEAAGVNGQGSGDGGSANTGAGRHGKS). A compositionally biased stretch (acidic residues) spans 63–72 (IDSDSNDEEQ). A compositionally biased stretch (low complexity) spans 84–94 (ANANGGEAAGV). Residues 95–105 (NGQGSGDGGSA) are compositionally biased toward gly residues.

The protein belongs to the SNF5 family.

Its subcellular location is the nucleus. Functionally, part of the chromatin structure-remodeling complex (RSC) which is involved in transcription regulation and nucleosome positioning. RSC is responsible for the transfer of a histone octamer from a nucleosome core particle to naked DNA. The reaction requires ATP and involves an activated RSC-nucleosome intermediate. Remodeling reaction also involves DNA translocation, DNA twist and conformational change. As a reconfigurer of centromeric and flanking nucleosomes, RSC complex is required both for proper kinetochore function in chromosome segregation and, via a PKC1-dependent signaling pathway, for organization of the cellular cytoskeleton. This subunit is essential for mitotic growth and required for cell cycle progression. This Candida glabrata (strain ATCC 2001 / BCRC 20586 / JCM 3761 / NBRC 0622 / NRRL Y-65 / CBS 138) (Yeast) protein is Chromatin structure-remodeling complex subunit SFH1 (SFH1).